Reading from the N-terminus, the 633-residue chain is Pesticidal crystal protein Cry2Aa (633 aa).

It belongs to the delta endotoxin family.

Its function is as follows. Promotes colloidosmotic lysis by binding to the midgut epithelial cells of both dipteran (Aedes aegypti) and lepidopteran (Manduca sexta) larvae. In Bacillus thuringiensis subsp. kenyae, this protein is Pesticidal crystal protein Cry2Aa (cry2Aa).